Here is a 63-residue protein sequence, read N- to C-terminus: Beta-defensin 38 (63 aa).

Residues 1-21 form the signal peptide; sequence MKISCFLLLILSLYFFQINQA. 3 disulfide bridges follow: Cys29/Cys58, Cys36/Cys51, and Cys41/Cys59.

Belongs to the beta-defensin family. As to expression, only expressed in epididymis (caput, corpus and cauda).

It localises to the secreted. In terms of biological role, synthetic Defb38 kills both Gram-negative (E.coli and P.aeruginosa) and Gram-positive (E.faecium) bacteria. This is Beta-defensin 38 (Defb38) from Mus musculus (Mouse).